Here is a 146-residue protein sequence, read N- to C-terminus: Basic phospholipase A2 73 (146 aa).

An N-terminal signal peptide occupies residues 1–19 (MYPAHLLVLLAVCVSLLGA). Positions 20-27 (ASIPPLPL) are excised as a propeptide. Disulfide bonds link cysteine 38–cysteine 98, cysteine 54–cysteine 145, cysteine 56–cysteine 72, cysteine 71–cysteine 126, cysteine 78–cysteine 119, cysteine 87–cysteine 112, and cysteine 105–cysteine 117. 3 residues coordinate Ca(2+): tyrosine 55, glycine 57, and glycine 59. The active site involves histidine 75. Aspartate 76 contacts Ca(2+). The active site involves aspartate 120.

The protein belongs to the phospholipase A2 family. Group I subfamily. D49 sub-subfamily. The cofactor is Ca(2+). Expressed by the venom gland.

Its subcellular location is the secreted. The enzyme catalyses a 1,2-diacyl-sn-glycero-3-phosphocholine + H2O = a 1-acyl-sn-glycero-3-phosphocholine + a fatty acid + H(+). Its function is as follows. Snake venom phospholipase A2 (PLA2) that inhibits neuromuscular transmission by blocking acetylcholine release from the nerve termini. PLA2 catalyzes the calcium-dependent hydrolysis of the 2-acyl groups in 3-sn-phosphoglycerides. In Hydrophis hardwickii (Hardwick's spine-bellied seasnake), this protein is Basic phospholipase A2 73.